The sequence spans 331 residues: MTIIVTGAAGFIGSNLVKGLNDRGETNVIAVDNLTRADKFHNLVDCEISDYLDKQDFLARFARGEFGKVRAVFHEGACSDTMETDGRYMMENNYRYTLSLMESCLEQGTQFLYASSAATYGASQVFREDREFERPLNVYGYSKFLFDQIVRRRLPSALSQIVGFRYFNVYGPRETHKGRMASVAFHNFNQFRADGTVKLFGEYGGYAPGMQSRDFISVEDVVKVNLHFFDHPDKSGIFNLGTGRAQPFNDIAATVVNTLREAEGKPRLSLDELVQEGLLEYVKFPDALRGKYQCFTQSDVSKLRSAGYSEPFLSVEEGVARYCRWLIERAG.

Residues 11–12 (FI), 32–33 (DN), lysine 39, lysine 54, 75–79 (EGACS), and asparagine 92 contribute to the NADP(+) site. The active-site Proton acceptor is tyrosine 139. Residue lysine 143 coordinates NADP(+). Residue asparagine 168 coordinates substrate. 2 residues coordinate NADP(+): valine 169 and lysine 177. The active-site Proton acceptor is lysine 177. Substrate is bound by residues arginine 179, histidine 186, 200 to 203 (FGEY), arginine 213, and tyrosine 292.

It belongs to the NAD(P)-dependent epimerase/dehydratase family. HldD subfamily. As to quaternary structure, homopentamer. NADP(+) serves as cofactor.

It carries out the reaction ADP-D-glycero-beta-D-manno-heptose = ADP-L-glycero-beta-D-manno-heptose. The protein operates within nucleotide-sugar biosynthesis; ADP-L-glycero-beta-D-manno-heptose biosynthesis; ADP-L-glycero-beta-D-manno-heptose from D-glycero-beta-D-manno-heptose 7-phosphate: step 4/4. In terms of biological role, catalyzes the interconversion between ADP-D-glycero-beta-D-manno-heptose and ADP-L-glycero-beta-D-manno-heptose via an epimerization at carbon 6 of the heptose. In Cupriavidus necator (strain ATCC 17699 / DSM 428 / KCTC 22496 / NCIMB 10442 / H16 / Stanier 337) (Ralstonia eutropha), this protein is ADP-L-glycero-D-manno-heptose-6-epimerase.